A 443-amino-acid chain; its full sequence is MTIYALSTGPGISGIAIVRVSGKDTKKVIKLLTNAALPETRVATLRKINKINTSELIDEGIILWFPGPESYTGEDMAEFHIHGSKAVIDALHHSISKIKNCRLADPGEFTKLAFQNGKINLLKAESIADLISAETEIQRQQAIKIMNGKSADKFNNLREKLLKILSHVEAKIDFPDEDLPEDILKNIKKISNEVILNIKKILDDQKVGERIREGFKIAIIGPTNAGKSSLLNHLSNRDVAIVSEIAGTTRDVIETHLNIDGYPVVVSDTAGIRDSKNEIEKKGIKLALDKADNADLKLIVIDAKSIDFKGVLKELMDENAILVINKSDLLNKDLNSEIKNYEHVLISVKNNLNLEDLISKIKNKLKNKFITSEDILITRARHRQHLEQSLNCLKNFEEKNEAEDFDKAAEDLRLATRHLGMIVGKVDVEEILGSIFNDFCIGK.

Residues Arg19, Glu78, and Lys118 each coordinate (6S)-5-formyl-5,6,7,8-tetrahydrofolate. The TrmE-type G domain maps to 214–366; that stretch reads GFKIAIIGPT…LISKIKNKLK (153 aa). Asn224 provides a ligand contact to K(+). GTP-binding positions include 224 to 229, 243 to 249, and 268 to 271; these read NAGKSS, SEIAGTT, and DTAG. Mg(2+) is bound at residue Ser228. Residues Ser243, Ile245, and Thr248 each contribute to the K(+) site. Residue Thr249 participates in Mg(2+) binding. A (6S)-5-formyl-5,6,7,8-tetrahydrofolate-binding site is contributed by Lys443.

This sequence belongs to the TRAFAC class TrmE-Era-EngA-EngB-Septin-like GTPase superfamily. TrmE GTPase family. As to quaternary structure, homodimer. Heterotetramer of two MnmE and two MnmG subunits. K(+) is required as a cofactor.

It is found in the cytoplasm. Its function is as follows. Exhibits a very high intrinsic GTPase hydrolysis rate. Involved in the addition of a carboxymethylaminomethyl (cmnm) group at the wobble position (U34) of certain tRNAs, forming tRNA-cmnm(5)s(2)U34. In Pelagibacter ubique (strain HTCC1062), this protein is tRNA modification GTPase MnmE.